Consider the following 342-residue polypeptide: Holliday junction branch migration complex subunit RuvB (342 aa).

The segment at 1–179 (MTNILSPEKS…FGIPMRLNFY (179 aa)) is large ATPase domain (RuvB-L). Residues I18, R19, G60, K63, T64, T65, 126–128 (EDF), R169, Y179, and R216 each bind ATP. Residue T64 participates in Mg(2+) binding. Residues 180-250 (NTEELKKVLN…ISDFGLNRLE (71 aa)) are small ATPAse domain (RuvB-S). The tract at residues 253–342 (CIGLDSNDYR…HQFNIFNENE (90 aa)) is head domain (RuvB-H). Residues R289, R308, and R313 each contribute to the DNA site.

This sequence belongs to the RuvB family. Homohexamer. Forms an RuvA(8)-RuvB(12)-Holliday junction (HJ) complex. HJ DNA is sandwiched between 2 RuvA tetramers; dsDNA enters through RuvA and exits via RuvB. An RuvB hexamer assembles on each DNA strand where it exits the tetramer. Each RuvB hexamer is contacted by two RuvA subunits (via domain III) on 2 adjacent RuvB subunits; this complex drives branch migration. In the full resolvosome a probable DNA-RuvA(4)-RuvB(12)-RuvC(2) complex forms which resolves the HJ.

The protein resides in the cytoplasm. The enzyme catalyses ATP + H2O = ADP + phosphate + H(+). The RuvA-RuvB-RuvC complex processes Holliday junction (HJ) DNA during genetic recombination and DNA repair, while the RuvA-RuvB complex plays an important role in the rescue of blocked DNA replication forks via replication fork reversal (RFR). RuvA specifically binds to HJ cruciform DNA, conferring on it an open structure. The RuvB hexamer acts as an ATP-dependent pump, pulling dsDNA into and through the RuvAB complex. RuvB forms 2 homohexamers on either side of HJ DNA bound by 1 or 2 RuvA tetramers; 4 subunits per hexamer contact DNA at a time. Coordinated motions by a converter formed by DNA-disengaged RuvB subunits stimulates ATP hydrolysis and nucleotide exchange. Immobilization of the converter enables RuvB to convert the ATP-contained energy into a lever motion, pulling 2 nucleotides of DNA out of the RuvA tetramer per ATP hydrolyzed, thus driving DNA branch migration. The RuvB motors rotate together with the DNA substrate, which together with the progressing nucleotide cycle form the mechanistic basis for DNA recombination by continuous HJ branch migration. Branch migration allows RuvC to scan DNA until it finds its consensus sequence, where it cleaves and resolves cruciform DNA. In Rickettsia africae (strain ESF-5), this protein is Holliday junction branch migration complex subunit RuvB.